The sequence spans 534 residues: Cytochrome P450 monooxygenase vrtK (534 aa).

C448 is a binding site for heme.

This sequence belongs to the cytochrome P450 family. Heme serves as cofactor.

Its pathway is secondary metabolite biosynthesis; terpenoid biosynthesis. Functionally, cytochrome P450 monooxygenase; part of the gene cluster that mediates the biosynthesis of viridicatumtoxin, a tetracycline-like fungal meroterpenoid with a unique, fused spirobicyclic ring system. The first step of the pathway is the production of the malonamoyl-CoA starter unit for the polyketide synthase vrtA. The aldolase vrtJ may be involved in the synthesis of the malonamate substrate for malonamoyl-CoA synthetase vrtB. The polyketide synthase vrtA then may utilize the malonamoyl-CoA starter unit, followed by sequential condensation of eight malonyl-CoA units to form the polyketide backbone. The cyclization of the last ring could be mediated by the lactamase-like protein vrtG. The proposed post-PKS tailoring steps are a hydroxylation at C5 catalyzed the cytochrome P450 monooxygenase vrtE, a hydroxylation at C12a catalyzed by VrtH and/or VrtI, and an O-methylation by the O-methyltransferase vrtF. VrtC is then proposed to catalyze the transfer of a geranyl group synthesized by vrtD to the aromatic C ring of the tetracyclic polyketide intermediate of viridicatumtoxin to yield previridicatumtoxin. Finally, the cytochrome P450 monooxygenase vrtK catalyzes the spirocyclization of the geranyl moiety of previridicatumtoxin to afford viridicatumtoxin. This Penicillium aethiopicum protein is Cytochrome P450 monooxygenase vrtK.